Here is a 240-residue protein sequence, read N- to C-terminus: Lactate utilization protein C (240 aa).

It belongs to the LutC/YkgG family.

Is involved in L-lactate degradation and allows cells to grow with lactate as the sole carbon source. The polypeptide is Lactate utilization protein C (Geobacillus thermodenitrificans (strain NG80-2)).